The primary structure comprises 375 residues: D-alanine--D-alanine ligase (375 aa).

Residues 145–348 enclose the ATP-grasp domain; sequence KRLLRDADLE…YPALITRLIE (204 aa). 175–230 contributes to the ATP binding site; sequence ITYLGSSLFVKPANQGSSVGVSKVINRISFDQALALAFCFDDKVLVESAINGRELE. Mg(2+)-binding residues include aspartate 302, glutamate 315, and asparagine 317.

Belongs to the D-alanine--D-alanine ligase family. Requires Mg(2+) as cofactor. Mn(2+) is required as a cofactor.

The protein resides in the cytoplasm. It carries out the reaction 2 D-alanine + ATP = D-alanyl-D-alanine + ADP + phosphate + H(+). The protein operates within cell wall biogenesis; peptidoglycan biosynthesis. Cell wall formation. The chain is D-alanine--D-alanine ligase from Baumannia cicadellinicola subsp. Homalodisca coagulata.